The sequence spans 192 residues: Ion-translocating oxidoreductase complex subunit A (192 aa).

A run of 6 helical transmembrane segments spans residues 5 to 25 (LLLL…FLGL), 39 to 59 (IGMS…SYLV), 65 to 85 (LPFD…AVVV), 102 to 122 (ALGI…VALL), 134 to 154 (AIFG…FSAM), and 171 to 191 (AIAM…TGLV).

This sequence belongs to the NqrDE/RnfAE family. The complex is composed of six subunits: RnfA, RnfB, RnfC, RnfD, RnfE and RnfG.

It is found in the cell inner membrane. Part of a membrane-bound complex that couples electron transfer with translocation of ions across the membrane. The protein is Ion-translocating oxidoreductase complex subunit A of Shewanella baltica (strain OS223).